A 372-amino-acid polypeptide reads, in one-letter code: Cytochrome b (372 aa).

The next 4 membrane-spanning stretches (helical) occupy residues 25 to 45 (FGSM…FLAL), 69 to 90 (WIMQ…YIHI), 105 to 125 (WLSG…GYVL), and 170 to 190 (FFAL…IHII). Residues His-75 and His-89 each coordinate heme b. Residues His-174 and His-188 each coordinate heme b. His-193 lines the a ubiquinone pocket. 4 consecutive transmembrane segments (helical) span residues 218-238 (YKDM…LSFA), 280-300 (LGGT…PFTH), 312-332 (LSQI…WTAS), and 339-358 (FITI…ITTP).

This sequence belongs to the cytochrome b family. As to quaternary structure, the cytochrome bc1 complex contains 3 respiratory subunits (MT-CYB, CYC1 and UQCRFS1), 2 core proteins (UQCRC1 and UQCRC2) and probably 6 low-molecular weight proteins. The cofactor is heme b.

Its subcellular location is the mitochondrion inner membrane. Its function is as follows. Component of the ubiquinol-cytochrome c reductase complex (complex III or cytochrome b-c1 complex) that is part of the mitochondrial respiratory chain. The b-c1 complex mediates electron transfer from ubiquinol to cytochrome c. Contributes to the generation of a proton gradient across the mitochondrial membrane that is then used for ATP synthesis. The protein is Cytochrome b (MT-CYB) of Naja nivea (Cape cobra).